The chain runs to 208 residues: Protein-L-isoaspartate O-methyltransferase (208 aa).

The active site involves Ser-59.

The protein belongs to the methyltransferase superfamily. L-isoaspartyl/D-aspartyl protein methyltransferase family.

It localises to the cytoplasm. It catalyses the reaction [protein]-L-isoaspartate + S-adenosyl-L-methionine = [protein]-L-isoaspartate alpha-methyl ester + S-adenosyl-L-homocysteine. Its function is as follows. Catalyzes the methyl esterification of L-isoaspartyl residues in peptides and proteins that result from spontaneous decomposition of normal L-aspartyl and L-asparaginyl residues. It plays a role in the repair and/or degradation of damaged proteins. The chain is Protein-L-isoaspartate O-methyltransferase from Proteus mirabilis (strain HI4320).